We begin with the raw amino-acid sequence, 448 residues long: Trigger factor (448 aa).

Residues 172–257 (GDRVTVDFVG…MKKIEWPHMP (86 aa)) enclose the PPIase FKBP-type domain.

This sequence belongs to the FKBP-type PPIase family. Tig subfamily.

The protein localises to the cytoplasm. It carries out the reaction [protein]-peptidylproline (omega=180) = [protein]-peptidylproline (omega=0). Involved in protein export. Acts as a chaperone by maintaining the newly synthesized protein in an open conformation. Functions as a peptidyl-prolyl cis-trans isomerase. This chain is Trigger factor, found in Burkholderia vietnamiensis (strain G4 / LMG 22486) (Burkholderia cepacia (strain R1808)).